The primary structure comprises 351 residues: UDP-3-O-acylglucosamine N-acyltransferase (351 aa).

The active-site Proton acceptor is H257.

It belongs to the transferase hexapeptide repeat family. LpxD subfamily. In terms of assembly, homotrimer.

The enzyme catalyses a UDP-3-O-[(3R)-3-hydroxyacyl]-alpha-D-glucosamine + a (3R)-hydroxyacyl-[ACP] = a UDP-2-N,3-O-bis[(3R)-3-hydroxyacyl]-alpha-D-glucosamine + holo-[ACP] + H(+). It participates in bacterial outer membrane biogenesis; LPS lipid A biosynthesis. In terms of biological role, catalyzes the N-acylation of UDP-3-O-acylglucosamine using 3-hydroxyacyl-ACP as the acyl donor. Is involved in the biosynthesis of lipid A, a phosphorylated glycolipid that anchors the lipopolysaccharide to the outer membrane of the cell. This Methylorubrum extorquens (strain PA1) (Methylobacterium extorquens) protein is UDP-3-O-acylglucosamine N-acyltransferase.